The primary structure comprises 674 residues: Methionine--tRNA ligase (674 aa).

The short motif at 12 to 22 is the 'HIGH' region element; it reads PYANGPIHLGH. Residues Cys143, Cys146, Cys156, and Cys159 each contribute to the Zn(2+) site. The 'KMSKS' region signature appears at 328 to 332; sequence KMSKS. Lys331 provides a ligand contact to ATP. The 102-residue stretch at 573 to 674 folds into the tRNA-binding domain; sequence SFAKLDLRIA…EGARPGMRVK (102 aa).

The protein belongs to the class-I aminoacyl-tRNA synthetase family. MetG type 1 subfamily. As to quaternary structure, homodimer. Requires Zn(2+) as cofactor.

The protein localises to the cytoplasm. The catalysed reaction is tRNA(Met) + L-methionine + ATP = L-methionyl-tRNA(Met) + AMP + diphosphate. In terms of biological role, is required not only for elongation of protein synthesis but also for the initiation of all mRNA translation through initiator tRNA(fMet) aminoacylation. This is Methionine--tRNA ligase from Nitrosococcus oceani (strain ATCC 19707 / BCRC 17464 / JCM 30415 / NCIMB 11848 / C-107).